The following is a 114-amino-acid chain: Hemerythrin subunit 2 (114 aa).

7 residues coordinate Fe cation: histidine 26, histidine 55, glutamate 59, histidine 74, histidine 78, histidine 102, and aspartate 107.

The protein belongs to the hemerythrin family.

Its function is as follows. Hemerythrin is a respiratory protein in blood cells of certain marine worms. The oxygen-binding site in each chain contains two iron atoms. The polypeptide is Hemerythrin subunit 2 (Golfingia vulgaris (Marine worm)).